A 454-amino-acid polypeptide reads, in one-letter code: uncharacterized protein (454 aa).

Residues Met-1 to Pro-25 are disordered. Basic residues predominate over residues Arg-14–Pro-23.

The protein localises to the cytoplasm. It localises to the nucleus. This is an uncharacterized protein from Saccharomyces cerevisiae (strain ATCC 204508 / S288c) (Baker's yeast).